The primary structure comprises 278 residues: Biotin synthase (278 aa).

The region spanning 1-227 is the Radical SAM core domain; it reads MQIMLCAISN…QSVVMVAGGR (227 aa). [4Fe-4S] cluster-binding residues include Cys-16, Cys-20, and Cys-23. [2Fe-2S] cluster contacts are provided by Cys-60, Cys-95, and Cys-153.

This sequence belongs to the radical SAM superfamily. Biotin synthase family. In terms of assembly, homodimer. [4Fe-4S] cluster is required as a cofactor. [2Fe-2S] cluster serves as cofactor.

The catalysed reaction is (4R,5S)-dethiobiotin + (sulfur carrier)-SH + 2 reduced [2Fe-2S]-[ferredoxin] + 2 S-adenosyl-L-methionine = (sulfur carrier)-H + biotin + 2 5'-deoxyadenosine + 2 L-methionine + 2 oxidized [2Fe-2S]-[ferredoxin]. It functions in the pathway cofactor biosynthesis; biotin biosynthesis; biotin from 7,8-diaminononanoate: step 2/2. In terms of biological role, catalyzes the conversion of dethiobiotin (DTB) to biotin by the insertion of a sulfur atom into dethiobiotin via a radical-based mechanism. The protein is Biotin synthase of Campylobacter jejuni subsp. jejuni serotype O:6 (strain 81116 / NCTC 11828).